The sequence spans 286 residues: Homeobox-leucine zipper protein ATHB-20 (286 aa).

A DNA-binding region (homeobox) is located at residues 84–143; the sequence is LGEKKKRLQLEQVKALEKSFELGNKLEPERKIQLAKALGMQPRQIAIWFQNRRARWKTRQ. Positions 144–179 are leucine-zipper; it reads LERDYDSLKKQFESLKSDNASLLAYNKKLLAEVMAL.

This sequence belongs to the HD-ZIP homeobox family. Class I subfamily. In terms of tissue distribution, widely expressed.

The protein resides in the nucleus. In terms of biological role, probable transcription factor. The sequence is that of Homeobox-leucine zipper protein ATHB-20 (ATHB-20) from Arabidopsis thaliana (Mouse-ear cress).